A 415-amino-acid chain; its full sequence is ATP-dependent Clp protease ATP-binding subunit ClpX (415 aa).

The ClpX-type ZB domain occupies 1-53; the sequence is MLRSKGDLVLGCSFCGKKEDERRRIVTGHGVSICNYCVERCAEYLRDRKPSAL. The Zn(2+) site is built by C12, C15, C34, and C37. Residue 118 to 125 coordinates ATP; the sequence is PTGSGKTL.

The protein belongs to the ClpX chaperone family. In terms of assembly, component of the ClpX-ClpP complex. Forms a hexameric ring that, in the presence of ATP, binds to fourteen ClpP subunits assembled into a disk-like structure with a central cavity, resembling the structure of eukaryotic proteasomes.

Functionally, ATP-dependent specificity component of the Clp protease. It directs the protease to specific substrates. Can perform chaperone functions in the absence of ClpP. The polypeptide is ATP-dependent Clp protease ATP-binding subunit ClpX (Treponema pallidum (strain Nichols)).